The primary structure comprises 156 residues: Small ribosomal subunit protein uS7 (156 aa).

Belongs to the universal ribosomal protein uS7 family. As to quaternary structure, part of the 30S ribosomal subunit. Contacts proteins S9 and S11.

In terms of biological role, one of the primary rRNA binding proteins, it binds directly to 16S rRNA where it nucleates assembly of the head domain of the 30S subunit. Is located at the subunit interface close to the decoding center, probably blocks exit of the E-site tRNA. This Edwardsiella ictaluri (strain 93-146) protein is Small ribosomal subunit protein uS7.